The chain runs to 332 residues: DNA-directed RNA polymerase subunit alpha (332 aa).

An alpha N-terminal domain (alpha-NTD) region spans residues 1-226 (MLIAQRPTLT…ELFGLARELN (226 aa)). Residues 243–332 (LSSELSMPIE…GYDEDESTTI (90 aa)) are alpha C-terminal domain (alpha-CTD).

This sequence belongs to the RNA polymerase alpha chain family. In terms of assembly, homodimer. The RNAP catalytic core consists of 2 alpha, 1 beta, 1 beta' and 1 omega subunit. When a sigma factor is associated with the core the holoenzyme is formed, which can initiate transcription.

It carries out the reaction RNA(n) + a ribonucleoside 5'-triphosphate = RNA(n+1) + diphosphate. In terms of biological role, DNA-dependent RNA polymerase catalyzes the transcription of DNA into RNA using the four ribonucleoside triphosphates as substrates. In Leifsonia xyli subsp. xyli (strain CTCB07), this protein is DNA-directed RNA polymerase subunit alpha.